The chain runs to 443 residues: Structure-specific endonuclease subunit SLX1 homolog (443 aa).

The disordered stretch occupies residues methionine 1–isoleucine 27. A GIY-YIG domain is found at glutamate 171–lysine 258. The SLX1-type zinc-finger motif lies at cysteine 340–cysteine 395.

This sequence belongs to the SLX1 family. As to quaternary structure, forms a heterodimer with him-18/slx-4. It depends on a divalent metal cation as a cofactor.

Its subcellular location is the nucleus. In terms of biological role, catalytic subunit of a heterodimeric structure-specific endonuclease that resolves DNA secondary structures generated during DNA repair and recombination. Has endonuclease activity towards branched DNA substrates, introducing single-strand cuts in duplex DNA close to junctions with ss-DNA (Potential). Has a preference for replication forks over 5' flap structures or Holliday junctions and shows much lower activity toward 3' flap structures. Required for proper crossover distribution through inhibition of crossover formation at the central region of chromosomes. This is Structure-specific endonuclease subunit SLX1 homolog from Caenorhabditis elegans.